We begin with the raw amino-acid sequence, 454 residues long: uncharacterized protein (454 aa).

The first 21 residues, 1–21 (MKYKTVKSIPLFLLGSIVFTA), serve as a signal peptide directing secretion. Cysteine 22 carries the N-palmitoyl cysteine lipid modification. Cysteine 22 carries S-diacylglycerol cysteine lipidation. Positions 55 to 64 (ASSSSSTTTS) are enriched in low complexity. Residues 55-87 (ASSSSSTTTSNDDNNQKGYFLETNRSTGTYDPN) are disordered. Polar residues predominate over residues 65–87 (NDDNNQKGYFLETNRSTGTYDPN).

The protein resides in the cell membrane. This is an uncharacterized protein from Mycoplasma pneumoniae (strain ATCC 29342 / M129 / Subtype 1) (Mycoplasmoides pneumoniae).